The sequence spans 539 residues: Phosphoenolpyruvate carboxykinase (ATP) (539 aa).

3 residues coordinate substrate: Arg64, Tyr206, and Lys212. ATP is bound by residues Lys212, His231, and 247-255 (GLSGTGKTT). Positions 212 and 231 each coordinate Mn(2+). Position 268 (Asp268) interacts with Mn(2+). ATP-binding positions include Glu296, Arg332, 448–449 (RI), and Thr454. Arg332 provides a ligand contact to substrate.

Belongs to the phosphoenolpyruvate carboxykinase (ATP) family. As to quaternary structure, monomer. It depends on Mn(2+) as a cofactor.

It localises to the cytoplasm. The enzyme catalyses oxaloacetate + ATP = phosphoenolpyruvate + ADP + CO2. It participates in carbohydrate biosynthesis; gluconeogenesis. Functionally, involved in the gluconeogenesis. Catalyzes the conversion of oxaloacetate (OAA) to phosphoenolpyruvate (PEP) through direct phosphoryl transfer between the nucleoside triphosphate and OAA. The polypeptide is Phosphoenolpyruvate carboxykinase (ATP) (Yersinia enterocolitica serotype O:8 / biotype 1B (strain NCTC 13174 / 8081)).